Reading from the N-terminus, the 424-residue chain is GTPase Obg (424 aa).

The 158-residue stretch at 1–158 folds into the Obg domain; sequence MFYDQAKIYV…RNLLLELKLL (158 aa). The 171-residue stretch at 159–329 folds into the OBG-type G domain; sequence ADVGLVGFPN…LVYAAAKALP (171 aa). Residues 165-172, 190-194, 212-215, 282-285, and 310-312 contribute to the GTP site; these read GFPNVGKS, FTTLV, DIPG, NKMD, and SAA. Residues Ser-172 and Thr-192 each contribute to the Mg(2+) site. Residues 347 to 424 enclose the OCT domain; sequence TQASAPHRFE…IAGIEFEWEE (78 aa).

The protein belongs to the TRAFAC class OBG-HflX-like GTPase superfamily. OBG GTPase family. In terms of assembly, monomer. It depends on Mg(2+) as a cofactor.

It is found in the cytoplasm. Its function is as follows. An essential GTPase which binds GTP, GDP and possibly (p)ppGpp with moderate affinity, with high nucleotide exchange rates and a fairly low GTP hydrolysis rate. Plays a role in control of the cell cycle, stress response, ribosome biogenesis and in those bacteria that undergo differentiation, in morphogenesis control. The polypeptide is GTPase Obg (Desulfitobacterium hafniense (strain Y51)).